A 426-amino-acid polypeptide reads, in one-letter code: Spermatogenesis-associated protein 2-like protein (426 aa).

Disordered stretches follow at residues 204–223 (AQDE…TYGA), 234–256 (DESS…PVEL), 269–300 (LWGS…EELE), and 316–347 (SRSG…ASSA). Residues Ser-318 and Ser-326 each carry the phosphoserine modification.

The protein belongs to the SPATA2 family.

This chain is Spermatogenesis-associated protein 2-like protein, found in Mus musculus (Mouse).